A 416-amino-acid chain; its full sequence is Phosphoribosylamine--glycine ligase (416 aa).

The ATP-grasp domain maps to 107 to 313; sequence KDFMKKYNVK…FVDLINAAMD (207 aa). 133-194 lines the ATP pocket; that stretch reads LKKCTYPIVI…EEYLEGVEAS (62 aa). The Mg(2+) site is built by glutamate 283 and asparagine 285.

It belongs to the GARS family. Requires Mg(2+) as cofactor. Mn(2+) is required as a cofactor.

It carries out the reaction 5-phospho-beta-D-ribosylamine + glycine + ATP = N(1)-(5-phospho-beta-D-ribosyl)glycinamide + ADP + phosphate + H(+). The protein operates within purine metabolism; IMP biosynthesis via de novo pathway; N(1)-(5-phospho-D-ribosyl)glycinamide from 5-phospho-alpha-D-ribose 1-diphosphate: step 2/2. In Clostridium acetobutylicum (strain ATCC 824 / DSM 792 / JCM 1419 / IAM 19013 / LMG 5710 / NBRC 13948 / NRRL B-527 / VKM B-1787 / 2291 / W), this protein is Phosphoribosylamine--glycine ligase.